The chain runs to 87 residues: Defensin-like protein 223 (87 aa).

Residues 1 to 34 (MKSTIFVLTLLIFVSLYFNIIVYVSFSFIGTSEI) form the signal peptide. Intrachain disulfides connect Cys55/Cys72, Cys58/Cys77, and Cys62/Cys79.

The protein belongs to the DEFL family.

The protein localises to the secreted. The chain is Defensin-like protein 223 from Arabidopsis thaliana (Mouse-ear cress).